The sequence spans 514 residues: Cytochrome P450 monooxygenase verB (514 aa).

Residues 5–25 form a helical membrane-spanning segment; it reads WLSASVLITAVILLVDYLNYY. Heme is bound at residue cysteine 457.

This sequence belongs to the cytochrome P450 family. Requires heme as cofactor.

It is found in the membrane. It functions in the pathway mycotoxin biosynthesis. In terms of biological role, cytochrome P450 monooxygenase; part of the gene cluster that mediates the biosynthesis of 11'-deoxyverticillin A, one of the dimeric epipolythiodioxopiperazines (ETPs) from the verticillin family that act as mycotoxins. 11'-deoxyverticillin A is required for normal conidiation. The nonribosomal peptide synthetase verP is speculated to be responsible for condensation of amino acids to form the carbon skeleton of verticillin, whereas the cluster-specific tailoring enzymes are involved in further modifications leading to the production of 11'-deoxyverticillin A. The polypeptide is Cytochrome P450 monooxygenase verB (Clonostachys rogersoniana).